Here is a 453-residue protein sequence, read N- to C-terminus: Ribosomal protein uS12 methylthiotransferase RimO (453 aa).

Residues proline 5 to proline 120 enclose the MTTase N-terminal domain. [4Fe-4S] cluster-binding residues include cysteine 14, cysteine 50, cysteine 79, cysteine 151, cysteine 155, and cysteine 158. Positions leucine 137 to glutamine 382 constitute a Radical SAM core domain. One can recognise a TRAM domain in the interval glutamine 385 to valine 453.

Belongs to the methylthiotransferase family. RimO subfamily. It depends on [4Fe-4S] cluster as a cofactor.

The protein localises to the cytoplasm. The catalysed reaction is L-aspartate(89)-[ribosomal protein uS12]-hydrogen + (sulfur carrier)-SH + AH2 + 2 S-adenosyl-L-methionine = 3-methylsulfanyl-L-aspartate(89)-[ribosomal protein uS12]-hydrogen + (sulfur carrier)-H + 5'-deoxyadenosine + L-methionine + A + S-adenosyl-L-homocysteine + 2 H(+). Its function is as follows. Catalyzes the methylthiolation of an aspartic acid residue of ribosomal protein uS12. In Burkholderia ambifaria (strain ATCC BAA-244 / DSM 16087 / CCUG 44356 / LMG 19182 / AMMD) (Burkholderia cepacia (strain AMMD)), this protein is Ribosomal protein uS12 methylthiotransferase RimO.